The sequence spans 167 residues: Probable chemoreceptor glutamine deamidase CheD (167 aa).

Belongs to the CheD family.

It carries out the reaction L-glutaminyl-[protein] + H2O = L-glutamyl-[protein] + NH4(+). Functionally, probably deamidates glutamine residues to glutamate on methyl-accepting chemotaxis receptors (MCPs), playing an important role in chemotaxis. The polypeptide is Probable chemoreceptor glutamine deamidase CheD (Natronomonas pharaonis (strain ATCC 35678 / DSM 2160 / CIP 103997 / JCM 8858 / NBRC 14720 / NCIMB 2260 / Gabara) (Halobacterium pharaonis)).